We begin with the raw amino-acid sequence, 252 residues long: Imidazole glycerol phosphate synthase subunit HisF (252 aa).

Active-site residues include Asp11 and Asp130.

The protein belongs to the HisA/HisF family. In terms of assembly, heterodimer of HisH and HisF.

The protein resides in the cytoplasm. It carries out the reaction 5-[(5-phospho-1-deoxy-D-ribulos-1-ylimino)methylamino]-1-(5-phospho-beta-D-ribosyl)imidazole-4-carboxamide + L-glutamine = D-erythro-1-(imidazol-4-yl)glycerol 3-phosphate + 5-amino-1-(5-phospho-beta-D-ribosyl)imidazole-4-carboxamide + L-glutamate + H(+). It participates in amino-acid biosynthesis; L-histidine biosynthesis; L-histidine from 5-phospho-alpha-D-ribose 1-diphosphate: step 5/9. IGPS catalyzes the conversion of PRFAR and glutamine to IGP, AICAR and glutamate. The HisF subunit catalyzes the cyclization activity that produces IGP and AICAR from PRFAR using the ammonia provided by the HisH subunit. This chain is Imidazole glycerol phosphate synthase subunit HisF, found in Polynucleobacter necessarius subsp. necessarius (strain STIR1).